We begin with the raw amino-acid sequence, 133 residues long: Probable non-specific lipid-transfer protein 2 (133 aa).

Residues 1-31 (MRTVSMAALVVIAAALAWTSSAEPAPAPAPG) form the signal peptide. Intrachain disulfides connect Cys35–Cys83, Cys45–Cys60, Cys61–Cys106, and Cys81–Cys121.

The protein belongs to the plant LTP family.

Plant non-specific lipid-transfer proteins transfer phospholipids as well as galactolipids across membranes. May play a role in wax or cutin deposition in the cell walls of expanding epidermal cells and certain secretory tissues. The sequence is that of Probable non-specific lipid-transfer protein 2 from Parietaria judaica (Pellitory-of-the-wall).